Here is a 498-residue protein sequence, read N- to C-terminus: Minor fimbrium subunit Mfa1 (498 aa).

A signal peptide spans 1-19 (MKLNKMFLVGALLSLGFAS). The N-palmitoyl cysteine moiety is linked to residue Cys20. The S-diacylglycerol cysteine moiety is linked to residue Cys20. Residues 20 to 50 (CSKEGNGPAPDSSSTADTHMSVSMSLPQHNR) constitute a propeptide that is removed on maturation. A disordered region spans residues 436–476 (SGNPFVPTDPDPNNPDTPDNPDTPDPEDPDTPNPEEPLPVQ).

It belongs to the bacteroidetes fimbrillin superfamily. FimA/Mfa1 family. As to quaternary structure, structural component of the fimbrial stalk. Minor fimbriae are composed of a structural subunit, most often Mfa1, and the accessory subunits Mfa3, Mfa4 and Mfa5. Mfa1 interacts with Mfa2; this anchors the fimbrium in the membrane. Fimbrium assembly occurs by linear, head-to-tail oligomerization of fimbrial subunits. This is mediated via insertion of a C-terminal beta-strand from one subunit into a groove in the N-terminal domain of the following subunit.

It localises to the fimbrium. The protein localises to the cell outer membrane. Its function is as follows. Structural subunit of the minor fimbriae. These filamentous pili are attached to the cell surface; they mediate biofilm formation, adhesion onto host cells and onto other bacteria that are part of the oral microbiome. They play an important role in invasion of periodontal tissues and are recognized as major virulence factors. Mfa1 orthologs from different strains have highly divergent sequences, and this correlates with pathogenicity. The sequence is that of Minor fimbrium subunit Mfa1 from Porphyromonas gingivalis (Bacteroides gingivalis).